The sequence spans 254 residues: Vitamin B12 import ATP-binding protein BtuD (254 aa).

Residues 3 to 239 (INYISVGNRL…ENLQQVFETP (237 aa)) enclose the ABC transporter domain. 29–36 (GPNGSGKS) contacts ATP.

This sequence belongs to the ABC transporter superfamily. Vitamin B12 importer (TC 3.A.1.13.1) family. The complex is composed of two ATP-binding proteins (BtuD), two transmembrane proteins (BtuC) and a solute-binding protein (BtuF).

The protein resides in the cell inner membrane. It catalyses the reaction an R-cob(III)alamin(out) + ATP + H2O = an R-cob(III)alamin(in) + ADP + phosphate + H(+). Part of the ABC transporter complex BtuCDF involved in vitamin B12 import. Responsible for energy coupling to the transport system. The protein is Vitamin B12 import ATP-binding protein BtuD of Vibrio vulnificus (strain CMCP6).